Here is a 123-residue protein sequence, read N- to C-terminus: UPF0426 protein At1g28150, chloroplastic (123 aa).

A chloroplast-targeting transit peptide spans 1–26; the sequence is MGFVLICTCPPSSGVVVSQLHHHQFS. Residues 97 to 123 form a disordered region; sequence SGITEEEVDADGVVSNDEDSPQQIEIE. Residues 100-123 show a composition bias toward acidic residues; sequence TEEEVDADGVVSNDEDSPQQIEIE.

The protein belongs to the UPF0426 family.

It is found in the plastid. The protein resides in the chloroplast. Its subcellular location is the plastoglobule. In Arabidopsis thaliana (Mouse-ear cress), this protein is UPF0426 protein At1g28150, chloroplastic.